The primary structure comprises 270 residues: ATP synthase subunit delta (270 aa).

Belongs to the ATPase delta chain family. F-type ATPases have 2 components, F(1) - the catalytic core - and F(0) - the membrane proton channel. F(1) has five subunits: alpha(3), beta(3), gamma(1), delta(1), epsilon(1). F(0) has three main subunits: a(1), b(2) and c(10-14). The alpha and beta chains form an alternating ring which encloses part of the gamma chain. F(1) is attached to F(0) by a central stalk formed by the gamma and epsilon chains, while a peripheral stalk is formed by the delta and b chains.

The protein localises to the cell membrane. F(1)F(0) ATP synthase produces ATP from ADP in the presence of a proton or sodium gradient. F-type ATPases consist of two structural domains, F(1) containing the extramembraneous catalytic core and F(0) containing the membrane proton channel, linked together by a central stalk and a peripheral stalk. During catalysis, ATP synthesis in the catalytic domain of F(1) is coupled via a rotary mechanism of the central stalk subunits to proton translocation. In terms of biological role, this protein is part of the stalk that links CF(0) to CF(1). It either transmits conformational changes from CF(0) to CF(1) or is implicated in proton conduction. The sequence is that of ATP synthase subunit delta from Kocuria rhizophila (strain ATCC 9341 / DSM 348 / NBRC 103217 / DC2201).